The sequence spans 224 residues: Phosphoribosylformylglycinamidine synthase subunit PurQ (224 aa).

The Glutamine amidotransferase type-1 domain occupies 4-224 (FGIIVFPGSN…ATDGLAMFIS (221 aa)). Catalysis depends on C87, which acts as the Nucleophile. Residues H204 and E206 contribute to the active site.

Part of the FGAM synthase complex composed of 1 PurL, 1 PurQ and 2 PurS subunits.

It localises to the cytoplasm. It carries out the reaction N(2)-formyl-N(1)-(5-phospho-beta-D-ribosyl)glycinamide + L-glutamine + ATP + H2O = 2-formamido-N(1)-(5-O-phospho-beta-D-ribosyl)acetamidine + L-glutamate + ADP + phosphate + H(+). The catalysed reaction is L-glutamine + H2O = L-glutamate + NH4(+). Its pathway is purine metabolism; IMP biosynthesis via de novo pathway; 5-amino-1-(5-phospho-D-ribosyl)imidazole from N(2)-formyl-N(1)-(5-phospho-D-ribosyl)glycinamide: step 1/2. Part of the phosphoribosylformylglycinamidine synthase complex involved in the purines biosynthetic pathway. Catalyzes the ATP-dependent conversion of formylglycinamide ribonucleotide (FGAR) and glutamine to yield formylglycinamidine ribonucleotide (FGAM) and glutamate. The FGAM synthase complex is composed of three subunits. PurQ produces an ammonia molecule by converting glutamine to glutamate. PurL transfers the ammonia molecule to FGAR to form FGAM in an ATP-dependent manner. PurS interacts with PurQ and PurL and is thought to assist in the transfer of the ammonia molecule from PurQ to PurL. The chain is Phosphoribosylformylglycinamidine synthase subunit PurQ from Synechocystis sp. (strain ATCC 27184 / PCC 6803 / Kazusa).